Here is a 318-residue protein sequence, read N- to C-terminus: Annexin D6 (318 aa).

Ala2 bears the N-acetylalanine mark. 4 Annexin repeats span residues 11–82 (PLPE…LWTL), 83–154 (DPTE…PLVS), 168–239 (KLAR…TAIK), and 243–314 (YPEK…ALLG). Residues Phe24, Gly26, Gly28, and Glu68 each contribute to the Ca(2+) site. Ser95 bears the Phosphoserine mark. 2 positions are modified to phosphothreonine: Thr100 and Thr112. Phosphotyrosine is present on Tyr129. Positions 256, 258, and 260 each coordinate Ca(2+). Tyr285 bears the Phosphotyrosine mark. Phosphoserine is present on Ser290. The Ca(2+) site is built by Asp300 and Thr301.

This sequence belongs to the annexin (TC 1.A.31.1) family. As to expression, expressed in flowers.

The polypeptide is Annexin D6 (ANN6) (Arabidopsis thaliana (Mouse-ear cress)).